We begin with the raw amino-acid sequence, 221 residues long: Large ribosomal subunit protein uL3 (221 aa).

The interval Gly-140–Ser-160 is disordered.

It belongs to the universal ribosomal protein uL3 family. As to quaternary structure, part of the 50S ribosomal subunit. Forms a cluster with proteins L14 and L19.

One of the primary rRNA binding proteins, it binds directly near the 3'-end of the 23S rRNA, where it nucleates assembly of the 50S subunit. The protein is Large ribosomal subunit protein uL3 of Chlamydia caviae (strain ATCC VR-813 / DSM 19441 / 03DC25 / GPIC) (Chlamydophila caviae).